The sequence spans 103 residues: Cell division protein FtsB (103 aa).

Topologically, residues 1-3 are cytoplasmic; sequence MGK. A helical transmembrane segment spans residues 4-21; that stretch reads LTLLLLALLVWLQYSLWF. Topologically, residues 22 to 103 are periplasmic; that stretch reads GKNGIHDYSR…RAATAGQTHR (82 aa). The stretch at 33–62 forms a coiled coil; the sequence is NDDVVAQQATNAKLKARNDQLFAEIDDLNG.

Belongs to the FtsB family. As to quaternary structure, part of a complex composed of FtsB, FtsL and FtsQ.

It localises to the cell inner membrane. In terms of biological role, essential cell division protein. May link together the upstream cell division proteins, which are predominantly cytoplasmic, with the downstream cell division proteins, which are predominantly periplasmic. In Salmonella agona (strain SL483), this protein is Cell division protein FtsB.